A 338-amino-acid chain; its full sequence is Biotin synthase (338 aa).

The Radical SAM core domain occupies 50 to 277 (QAVQLSTLMS…KSYVRLSAGR (228 aa)). Residues Cys65, Cys69, and Cys72 each coordinate [4Fe-4S] cluster. 4 residues coordinate [2Fe-2S] cluster: Cys109, Cys140, Cys200, and Arg272.

The protein belongs to the radical SAM superfamily. Biotin synthase family. Homodimer. [4Fe-4S] cluster is required as a cofactor. Requires [2Fe-2S] cluster as cofactor.

The catalysed reaction is (4R,5S)-dethiobiotin + (sulfur carrier)-SH + 2 reduced [2Fe-2S]-[ferredoxin] + 2 S-adenosyl-L-methionine = (sulfur carrier)-H + biotin + 2 5'-deoxyadenosine + 2 L-methionine + 2 oxidized [2Fe-2S]-[ferredoxin]. It participates in cofactor biosynthesis; biotin biosynthesis; biotin from 7,8-diaminononanoate: step 2/2. Functionally, catalyzes the conversion of dethiobiotin (DTB) to biotin by the insertion of a sulfur atom into dethiobiotin via a radical-based mechanism. This Actinobacillus succinogenes (strain ATCC 55618 / DSM 22257 / CCUG 43843 / 130Z) protein is Biotin synthase.